The primary structure comprises 728 residues: tRNA (guanine(27)-N(2))-dimethyltransferase (728 aa).

A compositionally biased stretch (acidic residues) spans 1–10 (MENMAEEELL). Disordered stretches follow at residues 1-78 (MENM…SKRH) and 98-118 (DVDS…SQTC). At Thr23 the chain carries Phosphothreonine. Positions 23 to 33 (TPAPDSAPVPA) are enriched in pro residues. A compositionally biased stretch (low complexity) spans 34–46 (PAADTALDSAPTP). Residues 47–61 (DSDPAPALAPAPAPA) are compositionally biased toward pro residues. The residue at position 63 (Ser63) is a Phosphoserine. Positions 101–118 (SASSLNSDNPGTENSQTC) are enriched in polar residues. Positions 132–136 (HKLRR) match the Nucleolar localization signal motif. The C2H2-type zinc finger occupies 181–203 (YHCIICSATITRRTDMLGHVKRH). The region spanning 224–683 (EILKETDTDI…APLMQFKSIL (460 aa)) is the Trm1 methyltransferase domain. The S-adenosyl-L-methionine site is built by Arg257, Asp304, Asp352, and Ala353. The Zn(2+) site is built by Cys483, Cys486, Cys508, and Cys510. Lys580 is covalently cross-linked (Glycyl lysine isopeptide (Lys-Gly) (interchain with G-Cter in SUMO2)). Residue Ser607 is modified to Phosphoserine. The tract at residues 693–728 (GAQSEGQMPPAAEDTVTDRVEMSVSDKAEASGCRRW) is disordered. The span at 708-721 (VTDRVEMSVSDKAE) shows a compositional bias: basic and acidic residues.

Belongs to the class I-like SAM-binding methyltransferase superfamily. Trm1 family. Expressed in various neuronal structures during embryonic development, including spinal ganglia, trigeminal nerve and ganglion, olfactory and nasopharyngeal epithelium, nuclei of the metencephalon, thalamus and medulla oblongata. Also expressed in lung, esophagus, epiglottis, ependyma, vertebral column, spinal cord and brown adipose tissue. Expression persists in the adult brain with dynamically changing patterns in cortex and cerebellum.

Its subcellular location is the nucleus. It is found in the nucleolus. The catalysed reaction is guanosine(27) in tRNA(Tyr) + 2 S-adenosyl-L-methionine = N(2)-dimethylguanosine(27) in tRNA(Tyr) + 2 S-adenosyl-L-homocysteine + 2 H(+). Functionally, specifically dimethylates a single guanine residue at position 27 of tRNA(Tyr) using S-adenosyl-L-methionine as donor of the methyl groups. Dimethylation at position 27 of tRNA(Tyr) is required for efficient translation of tyrosine codons. Also required to maintain 3-(3-amino-3-carboxypropyl)uridine (acp3U) in the D-loop of several cytoplasmic tRNAs. May play a role in motor coordination and exploratory behavior. This is tRNA (guanine(27)-N(2))-dimethyltransferase from Mus musculus (Mouse).